Reading from the N-terminus, the 231-residue chain is Maleylacetoacetate isomerase maiA (231 aa).

One can recognise a GST N-terminal domain in the interval 7 to 93; it reads PKVTLYTYFR…YLEEITPASS (87 aa). In terms of domain architecture, GST C-terminal spans 102–224; that stretch reads NPEARAVVRT…HWRTQPDTPE (123 aa).

The protein belongs to the GST superfamily. Zeta family.

It catalyses the reaction 4-maleylacetoacetate = 4-fumarylacetoacetate. It functions in the pathway amino-acid degradation; L-phenylalanine degradation; acetoacetate and fumarate from L-phenylalanine: step 5/6. Its function is as follows. Maleylacetoacetate isomerase; part of the L-tyrosine degradation gene cluster that mediates the biosynthesis of the brownish pigment pyomelanin as an alternative melanin. The 4-hydroxyphenylpyruvate dioxygenase hppD catalyzes the conversion of 4-hydroxyphenylpyruvate to homogentisic acid (HGA). The protein hmgX is crucial for this conversion and thus, probably functions as an accessory factor to mediate specific activity of hppD. The homogentisate 1,2-dioxygenase hmgA is then involved in the cleavage of the aromatic ring of HGA and its conversion to 4-maleylacetoacetate. When hmgA activity is lowered by the cell wall integrity (CWI) signaling pathway, HGA accumulates and leads to the production of pyomelanin through benzoquinone acetic acid after oxidation and polymerization. On the opposite, in non-stress conditions, both hppD and hmgA activities are balanced and HGA is degraded into 4-maleylacetoacetate. 4-maleylacetoacetate is further converted to 4-fumarylacetoacetate by the maleylacetoacetate isomerase maiA, which is degraded into fumarate and acetoacetate by the fumarylacetoacetase fahA. This chain is Maleylacetoacetate isomerase maiA, found in Aspergillus fumigatus (strain ATCC MYA-4609 / CBS 101355 / FGSC A1100 / Af293) (Neosartorya fumigata).